A 763-amino-acid polypeptide reads, in one-letter code: U3 small nucleolar RNA-associated protein 25 homolog (763 aa).

Positions 1–164 are disordered; the sequence is MGKRRSRGRS…SQKSSEEFTD (164 aa). Promotes p53/TP53 degradation regions lie at residues 1 to 190 and 580 to 642; these read MGKR…SQRT and VQLP…KKEE. A Phosphoserine modification is found at Ser10. The span at 25–43 shows a compositional bias: basic and acidic residues; sequence RDFGEEHPFYDRVSKKEVK. Residues Ser52, Ser60, and Ser64 each carry the phosphoserine modification. A compositionally biased stretch (basic and acidic residues) spans 54–70; sequence DSSHSESESESEQEHVS. A compositionally biased stretch (acidic residues) spans 84–119; the sequence is EEEEEEEEEEEEEEEDKEEVDDSAVGDSEMNGEDGG. The segment at 643–704 is represses p53/TP53 degradation; it reads LNFTHICEYT…YELPTYAHFY (62 aa).

It belongs to the UTP25 family. In terms of assembly, interacts with CAPN3; the interaction is required for CAPN3 translocation to the nucleolus. Post-translationally, phosphorylated. Phosphorylation is required to promote p53/TP53 degradation in the nucleolus which promotes cell cycle progression and liver development.

It localises to the nucleus. The protein localises to the nucleolus. Functionally, component of the ribosomal small subunit processome for the biogenesis of ribosomes, functions in pre-ribosomal RNA (pre-rRNA) processing. Essential for embryonic development in part through the regulation of p53 pathway. Controls the expansion growth of digestive organs and liver. Also involved in the sympathetic neuronal development. Mediates, with CAPN3, the proteasome-independent degradation of p53/TP53. The polypeptide is U3 small nucleolar RNA-associated protein 25 homolog (Rattus norvegicus (Rat)).